An 845-amino-acid chain; its full sequence is Proto-oncogene vav (845 aa).

Residues 1–119 (MELWRQCTHW…YTLSALSWTP (119 aa)) form the Calponin-homology (CH) domain. In terms of domain architecture, DH spans 194 to 373 (KRCCCLREIQ…RDLAQCVNEV (180 aa)). Residues 402–504 (RPKIDGELKI…WMEQFEMAIS (103 aa)) form the PH domain. The Phorbol-ester/DAG-type zinc finger occupies 515–564 (GHDFQMFSFEETTSCKACQMLLRGTFYQGYRCYRCRAPAHKECLGRVPPC). One can recognise an SH3 1 domain in the interval 592–660 (LGLPKMEVFQ…PCNRVHPYVH (69 aa)). Residues 671–765 (WYAGPMERAG…SLDTTLQFPY (95 aa)) form the SH2 domain. Residues 782-842 (KYFGTAKARY…PSNYVEEDYS (61 aa)) form the SH3 2 domain. A phosphotyrosine mark is found at Tyr826 and Tyr844.

As to quaternary structure, interacts with SHB. Interacts with APS, DOCK2, GRB2, GRB3, DOCK2, SLA, TEC and ZNF655/VIK. Interacts with SIAH2; without leading to its degradation. Associates with BLNK, PLCG1, GRB2 and NCK1 in a B-cell antigen receptor-dependent fashion. Interacts with CBLB; which inhibits tyrosine phosphorylation and down-regulates activity. May interact with CCPG1. Interacts with CLNK. Interacts with THEMIS2. Interacts with NEK3 and this interaction is prolactin-dependent. Interacts with ITK. Interacts with PTK2B/PYK2. Interacts with HCK. Interacts with PTK2B/PYK2. Interacts (via SH2 domain) with SYK. Interacts with ANKRD54. Interacts with CD6. Interacts with isoform 2 of CRACR2A. Interacts with LCP2; this interaction plays a role in TCR-mediated cytokine production. In terms of processing, phosphorylated by FYN. Phosphorylated on tyrosine residues by HCK in response to IFNG and bacterial lipopolysaccharide (LPS). As to expression, widely expressed in hematopoietic cells but not in other cell types. Found in the spleen and lung.

Its function is as follows. Couples tyrosine kinase signals with the activation of the Rho/Rac GTPases, thus leading to cell differentiation and/or proliferation. The polypeptide is Proto-oncogene vav (Vav1) (Mus musculus (Mouse)).